Here is a 196-residue protein sequence, read N- to C-terminus: Peptidyl-tRNA hydrolase (196 aa).

Tyr-18 lines the tRNA pocket. The Proton acceptor role is filled by His-23. Phe-69, Asn-71, and Asn-117 together coordinate tRNA.

It belongs to the PTH family. As to quaternary structure, monomer.

The protein resides in the cytoplasm. It catalyses the reaction an N-acyl-L-alpha-aminoacyl-tRNA + H2O = an N-acyl-L-amino acid + a tRNA + H(+). Hydrolyzes ribosome-free peptidyl-tRNAs (with 1 or more amino acids incorporated), which drop off the ribosome during protein synthesis, or as a result of ribosome stalling. Functionally, catalyzes the release of premature peptidyl moieties from peptidyl-tRNA molecules trapped in stalled 50S ribosomal subunits, and thus maintains levels of free tRNAs and 50S ribosomes. This Marinobacter nauticus (strain ATCC 700491 / DSM 11845 / VT8) (Marinobacter aquaeolei) protein is Peptidyl-tRNA hydrolase.